We begin with the raw amino-acid sequence, 549 residues long: 65-kDa microtubule-associated protein 9 (549 aa).

3 coiled-coil regions span residues 36–123, 160–199, and 459–492; these read IEIE…ERKI, SLRKLEELHRELYTLQEQKRNRVKQIQDNIRTLESLCSVL, and GNRLLSMLEEYTELREEKEQERRRKRDLKKHQGQ. A disordered region spans residues 474–549; it reads EEKEQERRRK…SFSTPLSRHG (76 aa). A compositionally biased stretch (basic residues) spans 481 to 490; the sequence is RRKRDLKKHQ. Phosphoserine occurs at positions 501 and 546. Residues 514–549 show a composition bias toward polar residues; that stretch reads VSTNKRFVSSPHTPQTDSPHSAKSNQSFSTPLSRHG.

The protein belongs to the MAP65/ASE1 family. As to quaternary structure, forms dimer. Binds to microtubules (MT).

Its subcellular location is the nucleus. It is found in the cytoplasm. It localises to the cytoskeleton. The protein resides in the spindle pole. The polypeptide is 65-kDa microtubule-associated protein 9 (MAP65-9) (Arabidopsis thaliana (Mouse-ear cress)).